Consider the following 582-residue polypeptide: Frizzled-10 (582 aa).

The first 21 residues, 1–21 (MQHPGPRLWLVLQVMIGSCTA), serve as a signal peptide directing secretion. Topologically, residues 22–226 (ISSMDLERPG…DVYWSRDDKR (205 aa)) are extracellular. The 122-residue stretch at 30–151 (PGDGKCQPVE…NDPNYLCMEA (122 aa)) folds into the FZ domain. 5 disulfides stabilise this stretch: C35-C96, C43-C89, C80-C118, C107-C148, and C111-C135. N-linked (GlcNAc...) asparagine glycosylation is present at N49. A disordered region spans residues 153–189 (NNGSDEPSRGSGMFPPLFRPQRPHSAQEHPLKDGGPG). N154 carries an N-linked (GlcNAc...) asparagine glycan. Residues 227-247 (FAVVWLAIWSVLCFFSSAFTV) traverse the membrane as a helical segment. Over 248 to 263 (LTFLIDPSRFRYPERP) the chain is Cytoplasmic. A helical membrane pass occupies residues 264–284 (IIFLSMCYCVYSVGYIIRLFA). At 285–312 (GAESIACDRDSGQLYVIQEGLESTGCTL) the chain is on the extracellular side. The helical transmembrane segment at 313-333 (VFLVLYYFGMASSLWWVVLTL) threads the bilayer. Residues 334–352 (TWFLAAGKKWGHEAIEANS) are Cytoplasmic-facing. Residues 353 to 373 (SYFHLAAWAIPAVKTILILVM) traverse the membrane as a helical segment. Topologically, residues 374–394 (RRVAGDELTGVCYVGSMDVNA) are extracellular. Residues 395 to 415 (LTGFVLVPLACYLVIGTSFIL) form a helical membrane-spanning segment. Residues 416-444 (SGFVALFHIRRVMKTGGENTDKLEKLMVR) lie on the Cytoplasmic side of the membrane. A helical transmembrane segment spans residues 445–465 (IGVFSLLYTVPATCVIACYFY). Residues 466–503 (ERLNMDYWKMLATQHKCKMNNQTKTPDCLMTTSIPAVE) are Extracellular-facing. N486 carries N-linked (GlcNAc...) asparagine glycosylation. The chain crosses the membrane as a helical span at residues 504 to 524 (VFMVKVSMLLVVGITSGVWVW). Residues 525-582 (TSKTLQSWQHVCSRGLKRKSRRKPASVVTSAGIYKKAQHPQKPHLGKYELPAQPSACV) are Cytoplasmic-facing. The Lys-Thr-X-X-X-Trp motif, mediates interaction with the PDZ domain of Dvl family members signature appears at 527-532 (KTLQSW). The segment at 561 to 582 (AQHPQKPHLGKYELPAQPSACV) is disordered. A PDZ-binding motif is present at residues 580–582 (ACV).

Belongs to the G-protein coupled receptor Fz/Smo family. In terms of assembly, interacts with MYOC. Interacts with WNT7B. Post-translationally, ubiquitinated by ZNRF3, leading to its degradation by the proteasome.

It localises to the cell membrane. Functionally, receptor for Wnt proteins. Functions in the canonical Wnt/beta-catenin signaling pathway. The canonical Wnt/beta-catenin signaling pathway leads to the activation of disheveled proteins, inhibition of GSK-3 kinase, nuclear accumulation of beta-catenin and activation of Wnt target genes. A second signaling pathway involving PKC and calcium fluxes has been seen for some family members, but it is not yet clear if it represents a distinct pathway or if it can be integrated in the canonical pathway, as PKC seems to be required for Wnt-mediated inactivation of GSK-3 kinase. Both pathways seem to involve interactions with G-proteins. May be involved in transduction and intercellular transmission of polarity information during tissue morphogenesis and/or in differentiated tissues. The polypeptide is Frizzled-10 (Fzd10) (Mus musculus (Mouse)).